A 582-amino-acid chain; its full sequence is DNA mismatch repair protein MutL (582 aa).

The protein belongs to the DNA mismatch repair MutL/HexB family.

In terms of biological role, this protein is involved in the repair of mismatches in DNA. It is required for dam-dependent methyl-directed DNA mismatch repair. May act as a 'molecular matchmaker', a protein that promotes the formation of a stable complex between two or more DNA-binding proteins in an ATP-dependent manner without itself being part of a final effector complex. The polypeptide is DNA mismatch repair protein MutL (Acidiphilium cryptum (strain JF-5)).